Reading from the N-terminus, the 142-residue chain is Small ribosomal subunit protein bS16 (142 aa).

The segment at 101 to 142 is disordered; the sequence is RPSFDALGGDDAGKGEAITQKKKAEKKDEAAAESSSSESTEA. Low complexity predominate over residues 132–142; sequence AESSSSESTEA.

This sequence belongs to the bacterial ribosomal protein bS16 family.

This Streptomyces avermitilis (strain ATCC 31267 / DSM 46492 / JCM 5070 / NBRC 14893 / NCIMB 12804 / NRRL 8165 / MA-4680) protein is Small ribosomal subunit protein bS16.